We begin with the raw amino-acid sequence, 619 residues long: 1-deoxy-D-xylulose-5-phosphate synthase (619 aa).

Thiamine diphosphate contacts are provided by residues His-74 and 115–117 (GHS). Asp-146 contacts Mg(2+). Residues 147–148 (GA), Asn-175, Tyr-285, and Glu-365 each bind thiamine diphosphate. Asn-175 provides a ligand contact to Mg(2+).

Belongs to the transketolase family. DXPS subfamily. As to quaternary structure, homodimer. Mg(2+) is required as a cofactor. The cofactor is thiamine diphosphate.

It catalyses the reaction D-glyceraldehyde 3-phosphate + pyruvate + H(+) = 1-deoxy-D-xylulose 5-phosphate + CO2. The protein operates within metabolic intermediate biosynthesis; 1-deoxy-D-xylulose 5-phosphate biosynthesis; 1-deoxy-D-xylulose 5-phosphate from D-glyceraldehyde 3-phosphate and pyruvate: step 1/1. Its function is as follows. Catalyzes the acyloin condensation reaction between C atoms 2 and 3 of pyruvate and glyceraldehyde 3-phosphate to yield 1-deoxy-D-xylulose-5-phosphate (DXP). This is 1-deoxy-D-xylulose-5-phosphate synthase from Clostridium acetobutylicum (strain ATCC 824 / DSM 792 / JCM 1419 / IAM 19013 / LMG 5710 / NBRC 13948 / NRRL B-527 / VKM B-1787 / 2291 / W).